The chain runs to 285 residues: NADPH-dependent 7-cyano-7-deazaguanine reductase (285 aa).

91-93 (IES) is a substrate binding site. Position 93 to 94 (93 to 94 (SK)) interacts with NADPH. The active-site Thioimide intermediate is the Cys191. Asp198 functions as the Proton donor in the catalytic mechanism. 230–231 (HE) is a binding site for substrate. 259–260 (RG) is a binding site for NADPH.

Belongs to the GTP cyclohydrolase I family. QueF type 2 subfamily. Homodimer.

The protein localises to the cytoplasm. The catalysed reaction is 7-aminomethyl-7-carbaguanine + 2 NADP(+) = 7-cyano-7-deazaguanine + 2 NADPH + 3 H(+). It participates in tRNA modification; tRNA-queuosine biosynthesis. Its function is as follows. Catalyzes the NADPH-dependent reduction of 7-cyano-7-deazaguanine (preQ0) to 7-aminomethyl-7-deazaguanine (preQ1). This Legionella pneumophila (strain Lens) protein is NADPH-dependent 7-cyano-7-deazaguanine reductase.